We begin with the raw amino-acid sequence, 331 residues long: Cytosolic sulfotransferase 8 (331 aa).

The span at 1-11 (MGEKDIPRNLK) shows a compositional bias: basic and acidic residues. Residues 1–31 (MGEKDIPRNLKEEEEEEEENQSEETKSLISS) form a disordered region. Positions 12–22 (EEEEEEEENQS) are enriched in acidic residues. 80–85 (KSGTTW) contacts 3'-phosphoadenylyl sulfate. The Proton acceptor role is filled by His-145. 3'-phosphoadenylyl sulfate contacts are provided by residues Arg-167, Ser-175, Tyr-231, and 297-299 (RKG).

This sequence belongs to the sulfotransferase 1 family. Expressed in seedlings and roots.

It is found in the cytoplasm. In terms of biological role, sulfotransferase that utilizes 3'-phospho-5'-adenylyl sulfate (PAPS) as sulfonate donor. No activity with brassinosteroids. This chain is Cytosolic sulfotransferase 8 (SOT8), found in Arabidopsis thaliana (Mouse-ear cress).